The chain runs to 492 residues: Ribulose bisphosphate carboxylase large chain (492 aa).

Substrate is bound by residues asparagine 131 and threonine 181. Lysine 183 functions as the Proton acceptor in the catalytic mechanism. Residue lysine 185 coordinates substrate. Mg(2+)-binding residues include lysine 209, aspartate 211, and glutamate 212. Lysine 209 is modified (N6-carboxylysine). The Proton acceptor role is filled by histidine 301. Substrate-binding residues include arginine 302, histidine 334, and serine 386.

Belongs to the RuBisCO large chain family. Type I subfamily. As to quaternary structure, heterohexadecamer of 8 large chains and 8 small chains. Requires Mg(2+) as cofactor.

It carries out the reaction 2 (2R)-3-phosphoglycerate + 2 H(+) = D-ribulose 1,5-bisphosphate + CO2 + H2O. The enzyme catalyses D-ribulose 1,5-bisphosphate + O2 = 2-phosphoglycolate + (2R)-3-phosphoglycerate + 2 H(+). RuBisCO catalyzes two reactions: the carboxylation of D-ribulose 1,5-bisphosphate, the primary event in carbon dioxide fixation, as well as the oxidative fragmentation of the pentose substrate. Both reactions occur simultaneously and in competition at the same active site. This Nitrosococcus oceani (strain ATCC 19707 / BCRC 17464 / JCM 30415 / NCIMB 11848 / C-107) protein is Ribulose bisphosphate carboxylase large chain.